Here is an 85-residue protein sequence, read N- to C-terminus: Conotoxin Mi15a (85 aa).

Residues 1–23 form the signal peptide; it reads MEKLTVLILVATVLLTIQVLGQS. Positions 24-49 are excised as a propeptide; sequence DRDKHLKRRPKQYATKRLSARMRGHR. Gln-50 carries the post-translational modification Pyrrolidone carboxylic acid.

Belongs to the conotoxin O2 superfamily. In terms of processing, contains 4 disulfide bonds. As to expression, expressed by the venom duct.

It localises to the secreted. This Conus miles (Soldier cone) protein is Conotoxin Mi15a.